Here is a 275-residue protein sequence, read N- to C-terminus: Formamidopyrimidine-DNA glycosylase (275 aa).

Catalysis depends on Pro2, which acts as the Schiff-base intermediate with DNA. The active-site Proton donor is Glu3. The Proton donor; for beta-elimination activity role is filled by Lys60. Residues His93 and Arg112 each coordinate DNA. The segment at 240 to 274 adopts an FPG-type zinc-finger fold; it reads FVYGRKDEPCKKCGSPIEKTVVGGRGTHFCIKCQK. Arg264 serves as the catalytic Proton donor; for delta-elimination activity.

Belongs to the FPG family. Monomer. It depends on Zn(2+) as a cofactor.

The enzyme catalyses Hydrolysis of DNA containing ring-opened 7-methylguanine residues, releasing 2,6-diamino-4-hydroxy-5-(N-methyl)formamidopyrimidine.. It catalyses the reaction 2'-deoxyribonucleotide-(2'-deoxyribose 5'-phosphate)-2'-deoxyribonucleotide-DNA = a 3'-end 2'-deoxyribonucleotide-(2,3-dehydro-2,3-deoxyribose 5'-phosphate)-DNA + a 5'-end 5'-phospho-2'-deoxyribonucleoside-DNA + H(+). Involved in base excision repair of DNA damaged by oxidation or by mutagenic agents. Acts as a DNA glycosylase that recognizes and removes damaged bases. Has a preference for oxidized purines, such as 7,8-dihydro-8-oxoguanine (8-oxoG). Has AP (apurinic/apyrimidinic) lyase activity and introduces nicks in the DNA strand. Cleaves the DNA backbone by beta-delta elimination to generate a single-strand break at the site of the removed base with both 3'- and 5'-phosphates. This is Formamidopyrimidine-DNA glycosylase from Bacillus licheniformis (strain ATCC 14580 / DSM 13 / JCM 2505 / CCUG 7422 / NBRC 12200 / NCIMB 9375 / NCTC 10341 / NRRL NRS-1264 / Gibson 46).